The sequence spans 253 residues: Ribosome maturation factor RimP (253 aa).

Residues 186–199 (RRGKAAEREKKRDL) are compositionally biased toward basic and acidic residues. Residues 186 to 253 (RRGKAAEREK…RARRGEIDPD (68 aa)) are disordered. Residues 201–216 (LAPPLAPHAKPAAQAK) show a composition bias toward low complexity. Residues 240–253 (LAADRARRGEIDPD) show a composition bias toward basic and acidic residues.

The protein belongs to the RimP family.

The protein resides in the cytoplasm. In terms of biological role, required for maturation of 30S ribosomal subunits. This chain is Ribosome maturation factor RimP, found in Bradyrhizobium sp. (strain BTAi1 / ATCC BAA-1182).